The chain runs to 434 residues: MSNKFHCDVCSADCTNRVRVSCAICPEYDLCVPCFSQGSYTGKHRPYHDYRIIETNSYPILCPDWGADEELQLIKGAQTLGLGNWQDIADHIGSRGKEEVKEHYLKYYLESKYYPIPDITQNIHVPQDEFLEQRRHRIESFRERPLEPPRKPMASVPSCHEVQGFMPGRLEFETEFENEAEGPVKDMVFEPDDQPLDIELKFAILDIYNSRLTTRAEKKRLLFENHLMDYRKLQAIDKKRSKEAKELYNRIKPFARVMTAQDFEEFSKDILEELHCRARIQQLQEWRSNGLTTLEAGLKYERDKQARISSFEKFGASTAASLSEGNSRYRSNSAHRSNAEYSQNYSENGGRKKNMTISDIQHAPDYALLSNDEQQLCIQLKILPKPYLVLKEVMFRELLKTGGNLSKSACRELLNIDPIKANRIYDFFQSQNWM.

The ZZ-type zinc finger occupies 2–58 (SNKFHCDVCSADCTNRVRVSCAICPEYDLCVPCFSQGSYTGKHRPYHDYRIIETNSY). Zn(2+)-binding residues include C7, C10, C22, C25, C31, C34, H44, and H48. Residues 60–112 (ILCPDWGADEELQLIKGAQTLGLGNWQDIADHIGSRGKEEVKEHYLKYYLESK) enclose the SANT domain. Positions 325 to 347 (GNSRYRSNSAHRSNAEYSQNYSE) are enriched in polar residues. Residues 325–352 (GNSRYRSNSAHRSNAEYSQNYSENGGRK) are disordered. One can recognise an SWIRM domain in the interval 349-434 (GGRKKNMTIS…YDFFQSQNWM (86 aa)).

In terms of assembly, component of the 1.8 MDa SAGA (Spt-Ada-Gcn5 acetyltransferase) complex, which is composed of 19 subunits TRA1, SPT7, TAF5, NGG1/ADA3, SGF73, SPT20/ADA5, SPT8, TAF12, TAF6, HFI1/ADA1, UBP8, GCN5, ADA2, SPT3, SGF29, TAF10, TAF9, SGF11 and SUS1. The SAGA complex is composed of 4 modules, namely the HAT (histone acetyltransferase) module (GCN5, ADA2, NGG1/ADA3 and SGF29), the DUB (deubiquitinating) module (UBP8, SGF11, SGF73 and SUS1), the core or TAF (TBP-associated factor) module (TAF5, TAF6, TAF9, TAF10 and TAF12), and the Tra1 or SPT (Suppressor of Ty) module (TRA1, HFI1/ADA1, SPT3, SPT7, SPT8 and SPT20/ADA5). The Tra1/SPT module binds activators, the core module recruits TBP (TATA-binding protein), the HAT module contains the histone H3 acetyltransferase GCN5, and the DUB module comprises the histone H2B deubiquitinase UBP8. Also identified in an altered form of SAGA, named SALSA (SAGA altered, Spt8 absent) or SLIK (SAGA-like) complex, which contains a C-terminal truncated form of SPT7 and is missing SPT8. However, it has been shown that the SAGA and SAGA-like SALSA/SLIK transcriptional coactivators are structurally and biochemically equivalent. Component of the 0.8 MDa ADA complex, a HAT complex distinct from SAGA, which at least consists of ADA2, NGG1/ADA3, AHC1, AHC2, SGF29 and GCN5. Component of an ADA/GCN5 complex that consists of HFI1/ADA1, ADA2, NGG1/ADA3, SPT20/ADA5 and GCN5 and probably is a subcomplex of SAGA.

It localises to the nucleus. In terms of biological role, component of the transcription coactivator SAGA complex. SAGA acts as a general cofactor required for essentially all RNA polymerase II transcription. At the promoters, SAGA is required for transcription pre-initiation complex (PIC) recruitment. It influences RNA polymerase II transcriptional activity through different activities such as TBP interaction (via core/TAF module) and promoter selectivity, interaction with transcription activators (via Tra1/SPT module), and chromatin modification through histone acetylation (via HAT module) and deubiquitination (via DUB module). SAGA preferentially acetylates histones H3 (to form H3K9ac, H3K14ac, H3K18ac and H3K23ac) and H2B and deubiquitinates histone H2B. SAGA interacts with DNA via upstream activating sequences (UASs). Also identified in a modified version of SAGA named SALSA or SLIK. The cleavage of SPT7 and the absence of the SPT8 subunit in SLIK neither drive any major conformational differences in its structure compared with SAGA, nor significantly affect HAT, DUB, or DNA-binding activities. Component of the ADA histone acetyltransferase complex, which preferentially acetylates nucleosomal histones H3 (to form H3K14ac and H3K18ac) and H2B. Positioned at chromosomal termini to participate in both transcriptional repression and activation in response to nutrient signaling, promoting transcriptional silencing at telomeres and ribosomal DNA. May be involved in response to DNA damage by genotoxic agents. This chain is SAGA complex subunit ADA2 (ADA2), found in Saccharomyces cerevisiae (strain ATCC 204508 / S288c) (Baker's yeast).